A 136-amino-acid polypeptide reads, in one-letter code: C-type natriuretic peptide prohormone (136 aa).

The signal sequence occupies residues 1–21; the sequence is MSGQTSFYCGLLLVLLIQAQA. A disulfide bond links cysteine 120 and cysteine 136.

It belongs to the natriuretic peptide family. CNP-115 is differentially processed to produce CNP-38 and CNP-39 in the heart and CNP-22 in the brain.

The protein localises to the secreted. In terms of biological role, hormone which may be vasoactive and natriuretic. Has a cGMP-stimulating activity. The sequence is that of C-type natriuretic peptide prohormone from Triakis scyllium (Banded houndshark).